Reading from the N-terminus, the 236-residue chain is UPF0257 lipoprotein YnfC (236 aa).

The signal sequence occupies residues 1-16 (MKKPLLLTLLCMILAG). Cys-17 carries the N-palmitoyl cysteine lipid modification. Cys-17 carries the S-diacylglycerol cysteine lipid modification.

This sequence belongs to the UPF0257 family.

The protein localises to the cell membrane. This Salmonella heidelberg (strain SL476) protein is UPF0257 lipoprotein YnfC.